The following is a 671-amino-acid chain: Anti-sigma-I factor RsgI2 (671 aa).

Residues 1–57 are Cytoplasmic-facing; that stretch reads MSHYTGIILKLESDRAIVLTDGLDFMELKLKPGMQRGQHVIFDESDLYSAGLITRYK. In terms of domain architecture, RsgI N-terminal anti-sigma spans 4–51; that stretch reads YTGIILKLESDRAIVLTDGLDFMELKLKPGMQRGQHVIFDESDLYSAG. A helical transmembrane segment spans residues 58–78; sequence SIIMPFSAFAAAAAVFLVILF. Topologically, residues 79-671 are extracellular; it reads SLRFVSISQE…SGTLYWGIEP (593 aa). Disordered regions lie at residues 290-323 and 359-505; these read TEAQPVDIPKSSPTPASFTAHVPTPPKTPSIPHT and PVPV…APTE. Positions 359–379 are enriched in low complexity; it reads PVPVSTPKPVSTPAYSSTPTP. A compositionally biased stretch (pro residues) spans 380-400; that stretch reads ESTPVPVSTPKPASTPTPAST. Over residues 401–425 the composition is skewed to low complexity; that stretch reads PKPVSTPTHVSTPKPISTPTSTPRP. Over residues 426 to 446 the composition is skewed to pro residues; the sequence is ASTPKPTSTPTPESTPKPTST. Over residues 447-491 the composition is skewed to low complexity; it reads PAPVSTPTSTPIPTYTSTPASTPIPAYTSTPTSIPTLTPATSPAP. Positions 492 to 502 are enriched in pro residues; that stretch reads TSSPTPIPSPA. The region spanning 508–671 is the CBM3 domain; that stretch reads LLTKIELQAY…SGTLYWGIEP (164 aa). Thr554, Asp556, Asp637, Ser640, and Asp641 together coordinate Ca(2+).

As to quaternary structure, interacts (via RsgI N-terminal anti-sigma domain) with SigI2.

The protein resides in the cell membrane. Its function is as follows. Anti-sigma factor for SigI2. Negatively regulates SigI2 activity through direct interaction. Binding of the polysaccharide substrate to the extracellular C-terminal sensing domain of RsgI2 may induce a conformational change in its N-terminal cytoplasmic region, leading to the release and activation of SigI2. The chain is Anti-sigma-I factor RsgI2 from Acetivibrio thermocellus (strain ATCC 27405 / DSM 1237 / JCM 9322 / NBRC 103400 / NCIMB 10682 / NRRL B-4536 / VPI 7372) (Clostridium thermocellum).